The sequence spans 433 residues: tRNA-2-methylthio-N(6)-dimethylallyladenosine synthase (433 aa).

In terms of domain architecture, MTTase N-terminal spans 3 to 118 (KKLFIQTLGC…ISRVIHQEKA (116 aa)). The [4Fe-4S] cluster site is built by Cys12, Cys49, Cys81, Cys150, Cys154, and Cys157. The region spanning 136-369 (SRNDYKAMVN…QARHKEILEE (234 aa)) is the Radical SAM core domain. The 62-residue stretch at 372-433 (QKEVGAIHSV…YRAFLIGEPL (62 aa)) folds into the TRAM domain.

The protein belongs to the methylthiotransferase family. MiaB subfamily. As to quaternary structure, monomer. [4Fe-4S] cluster is required as a cofactor.

The protein resides in the cytoplasm. The catalysed reaction is N(6)-dimethylallyladenosine(37) in tRNA + (sulfur carrier)-SH + AH2 + 2 S-adenosyl-L-methionine = 2-methylsulfanyl-N(6)-dimethylallyladenosine(37) in tRNA + (sulfur carrier)-H + 5'-deoxyadenosine + L-methionine + A + S-adenosyl-L-homocysteine + 2 H(+). Its function is as follows. Catalyzes the methylthiolation of N6-(dimethylallyl)adenosine (i(6)A), leading to the formation of 2-methylthio-N6-(dimethylallyl)adenosine (ms(2)i(6)A) at position 37 in tRNAs that read codons beginning with uridine. This chain is tRNA-2-methylthio-N(6)-dimethylallyladenosine synthase, found in Wolinella succinogenes (strain ATCC 29543 / DSM 1740 / CCUG 13145 / JCM 31913 / LMG 7466 / NCTC 11488 / FDC 602W) (Vibrio succinogenes).